The sequence spans 312 residues: Ribosomal protein L11 methyltransferase (312 aa).

S-adenosyl-L-methionine contacts are provided by threonine 160, glycine 181, aspartate 203, and asparagine 248.

It belongs to the methyltransferase superfamily. PrmA family.

Its subcellular location is the cytoplasm. The enzyme catalyses L-lysyl-[protein] + 3 S-adenosyl-L-methionine = N(6),N(6),N(6)-trimethyl-L-lysyl-[protein] + 3 S-adenosyl-L-homocysteine + 3 H(+). In terms of biological role, methylates ribosomal protein L11. The protein is Ribosomal protein L11 methyltransferase of Fusobacterium nucleatum subsp. nucleatum (strain ATCC 25586 / DSM 15643 / BCRC 10681 / CIP 101130 / JCM 8532 / KCTC 2640 / LMG 13131 / VPI 4355).